A 475-amino-acid chain; its full sequence is Dynein regulatory complex subunit 4 (475 aa).

The tract at residues 1-22 is disordered; the sequence is MPPKRKSSPKGKTPTVVDGLST. The regulates microtubule-binding stretch occupies residues 1-113; that stretch reads MPPKRKSSPK…LLYEQQNMLS (113 aa). 3 coiled-coil regions span residues 20 to 104, 142 to 200, and 242 to 426; these read LSTE…VKHL, RSLK…QEEE, and KNLD…VARV. The segment at 114–257 is microtubule-binding; the sequence is ELKAESIIST…TSLKEELKEM (144 aa).

Belongs to the DRC4 family. As to quaternary structure, component of the nexin-dynein regulatory complex (N-DRC). Interacts with microtubules.

It localises to the cytoplasm. Its subcellular location is the cytoskeleton. The protein localises to the cell projection. It is found in the cilium. The protein resides in the flagellum. It localises to the cilium axoneme. Its subcellular location is the cilium basal body. The protein localises to the golgi apparatus. It is found in the flagellum axoneme. In terms of biological role, component of the nexin-dynein regulatory complex (N-DRC), a key regulator of ciliary/flagellar motility which maintains the alignment and integrity of the distal axoneme and regulates microtubule sliding in motile axonemes. Plays an important role in the assembly of the N-DRC linker. Plays dual roles at both the primary (or non-motile) cilia to regulate hedgehog signaling and in motile cilia to coordinate cilia movement. Required for proper slow muscle development and positively regulates ciliary smoothened (SMO)-dependent Hedgehog (Hh) signaling pathway. Required for tether cilia motility which is essential for normal otolith formation and localization in the developing inner ear. This is Dynein regulatory complex subunit 4 (gas8) from Danio rerio (Zebrafish).